The following is a 152-amino-acid chain: uncharacterized protein (152 aa).

A disordered region spans residues 127 to 152; the sequence is EKEKAERKAEKAKKNKKKSSTKTKKK. Positions 136-152 are enriched in basic residues; it reads EKAKKNKKKSSTKTKKK.

This sequence belongs to the mimivirus R546 family.

This is an uncharacterized protein from Sputnik virophage.